The sequence spans 614 residues: UvrABC system protein C (614 aa).

Residues 12-91 (ESPGVYLMKG…IKKHRPRYNL (80 aa)) enclose the GIY-YIG domain. The UVR domain maps to 201–236 (RDLLKTYRERMASAAANERYEEAARYRDLIRAIEVT).

This sequence belongs to the UvrC family. As to quaternary structure, interacts with UvrB in an incision complex.

The protein resides in the cytoplasm. The UvrABC repair system catalyzes the recognition and processing of DNA lesions. UvrC both incises the 5' and 3' sides of the lesion. The N-terminal half is responsible for the 3' incision and the C-terminal half is responsible for the 5' incision. The chain is UvrABC system protein C from Geobacter metallireducens (strain ATCC 53774 / DSM 7210 / GS-15).